A 350-amino-acid chain; its full sequence is Protein RecA (350 aa).

G67 to T74 serves as a coordination point for ATP.

This sequence belongs to the RecA family.

It is found in the cytoplasm. Can catalyze the hydrolysis of ATP in the presence of single-stranded DNA, the ATP-dependent uptake of single-stranded DNA by duplex DNA, and the ATP-dependent hybridization of homologous single-stranded DNAs. It interacts with LexA causing its activation and leading to its autocatalytic cleavage. The protein is Protein RecA of Mycobacterium avium (strain 104).